A 539-amino-acid polypeptide reads, in one-letter code: MSTTSSSGRIAADQNNKCVNSVAAALCPLSNCQFSGVVISAITDEQKLEFSNKYNSSCTLSCSYDSQGVLLRIMLDNDQGHVLKEYMISADTDAAQLGRRCYAISLESDNLVLRFVSDKDQQLFRKVVENVKHLRPKSVFSQRTEESSASQYFQFYGYLSQQQNMMQDYVRTSTYQRAILGNAIDFQDKVVLDVGAGSGILSFFAVQAGAAKVYAIEASNMAQYAQQLVESNNVQHKISVIPGKIEEIELPEKVDVIISEPMGYMLYNERMLETYLHARKWLKPHGKMYPTHGDLHIAPFSDESLYSEQYNKANFWYQSAFHGVDLTTLHKEGMKEYFRQPIVDTFDIRICMAKSVRHVCDFLNDKEDDLHVIDIPLEFHILQTGICHGLAFWFDVEFSGSSQNVWLSTSPTAPLTHWYQVRCLLPMPIFIKQGQTLTGRVLLEANRRQSYDVTIDLHIEGTLISSSNTLDLKNPYFRYTGAPVQAPPGTNTQSPSEQYWTQMDTQGNRNSNSMLNGTLSVNGMGDGSMDITHGLLHPH.

The region spanning 149-458 (ASQYFQFYGY…QSYDVTIDLH (310 aa)) is the SAM-dependent MTase PRMT-type domain. Positions 162, 171, 195, 217, 246, and 274 each coordinate S-adenosyl-L-methionine. Arg509 is modified (asymmetric dimethylarginine; by autocatalysis).

This sequence belongs to the class I-like SAM-binding methyltransferase superfamily. Protein arginine N-methyltransferase family. As to quaternary structure, homodimer. Post-translationally, the dimethylated protein is the major form.

The protein localises to the cytoplasm. It localises to the nucleus. The enzyme catalyses L-arginyl-[protein] + 2 S-adenosyl-L-methionine = N(omega),N(omega)-dimethyl-L-arginyl-[protein] + 2 S-adenosyl-L-homocysteine + 2 H(+). Its function is as follows. Methylates (mono- and asymmetric dimethylation) the guanidino nitrogens of arginyl residues in proteins. May methylate histone H3 at 'Arg-17' and activate transcription via chromatin remodeling. In Drosophila mojavensis (Fruit fly), this protein is Histone-arginine methyltransferase CARMER (Art4).